Consider the following 466-residue polypeptide: Asparagine--tRNA ligase (466 aa).

Belongs to the class-II aminoacyl-tRNA synthetase family. Homodimer.

Its subcellular location is the cytoplasm. It carries out the reaction tRNA(Asn) + L-asparagine + ATP = L-asparaginyl-tRNA(Asn) + AMP + diphosphate + H(+). The polypeptide is Asparagine--tRNA ligase (Aeromonas hydrophila subsp. hydrophila (strain ATCC 7966 / DSM 30187 / BCRC 13018 / CCUG 14551 / JCM 1027 / KCTC 2358 / NCIMB 9240 / NCTC 8049)).